Consider the following 954-residue polypeptide: Bifunctional endo-1,4-beta-xylanase XylA (954 aa).

The segment at residues 1–27 (MKLSKIKKVLSGTVSALMIASAAPVVA) is a signal peptide (or 28, or 29). The GH11 domain occupies 29–236 (AADQQTRGNV…SNGSANVKSV (208 aa)). Residue Glu-122 is the Nucleophile of the active site. Residue Glu-223 is the Proton donor of the active site. A compositionally biased stretch (polar residues) spans 233–243 (VKSVSVTQGGS). Residues 233–628 (VKSVSVTQGG…NNNNSAGSSD (396 aa)) are disordered. Residues 246-622 (NGGQQQNNDW…WNQGQQNNNN (377 aa)) are compositionally biased toward low complexity. One can recognise a GH10 domain in the interval 624–952 (AGSSDSLKGA…KPAYDRVMAL (329 aa)). Glu-774 functions as the Proton donor in the catalytic mechanism. Residue Glu-884 is the Nucleophile of the active site.

This sequence in the N-terminal section; belongs to the glycosyl hydrolase 11 (cellulase G) family. It in the C-terminal section; belongs to the glycosyl hydrolase 10 (cellulase F) family.

It carries out the reaction Endohydrolysis of (1-&gt;4)-beta-D-xylosidic linkages in xylans.. It participates in glycan degradation; xylan degradation. Its function is as follows. Xylanase domain releases more xylo-oligosaccharides and GH10 domain more xylose. The polypeptide is Bifunctional endo-1,4-beta-xylanase XylA (xynA) (Ruminococcus flavefaciens).